A 446-amino-acid polypeptide reads, in one-letter code: MNQPNPNKQPIVQSTSEQTSNEEVDTVLGRFTLFVKDLSNGLNGSQEVPPSQESVSEEAEVISRKIIVLGQTFDNFDNANDYIESKLWLSYRCGFEPIPKSIDGPQPIQFFPSIIFNRSTIYSNFANLKSLFDKENFTSDAGWGCMIRTSQNLLANTLLKLYPKNEPEIVKLFQDDTSSPFSIHNFIRVASLSPLHVKPGEWFGPNAASLSIKRLASELLQDQEIDGIKIPRVFISENSDLFDDEIRDVFAKEKNASVLILFPIRLGIDKVNSYYYNSIFHLLASKYSCGIAGGKPSSSFYFLGYEDTDLIYFDPHLPQVVETPINMDSYHTTNYNRLNISLLDPSMMIGILVTNIDEYIDFKTSCLDINNKIVHFHPHTLPVQQDSIINQSWEEVQDEEEEFINLNVSKIENEQQQEQGQSTDAPDEFIDIGNQSSSVVSVPSNV.

A compositionally biased stretch (polar residues) spans 1–19; the sequence is MNQPNPNKQPIVQSTSEQT. Positions 1–23 are disordered; the sequence is MNQPNPNKQPIVQSTSEQTSNEE. The active-site Nucleophile is the C145. Catalysis depends on residues D314 and H316. Polar residues predominate over residues 412-424; the sequence is ENEQQQEQGQSTD. A disordered region spans residues 412–446; it reads ENEQQQEQGQSTDAPDEFIDIGNQSSSVVSVPSNV. Residues 436-446 are compositionally biased toward low complexity; that stretch reads SSSVVSVPSNV.

This sequence belongs to the peptidase C54 family.

It localises to the cytoplasm. The protein localises to the nucleus. It is found in the preautophagosomal structure. It carries out the reaction [protein]-C-terminal L-amino acid-glycyl-phosphatidylethanolamide + H2O = [protein]-C-terminal L-amino acid-glycine + a 1,2-diacyl-sn-glycero-3-phosphoethanolamine. In terms of biological role, cysteine protease that plays a key role in cytoplasm to vacuole transport (Cvt) and autophagy by mediating both proteolytic activation and delipidation of ATG8. Required for selective autophagic degradation of the nucleus (nucleophagy) as well as for mitophagy which contributes to regulate mitochondrial quantity and quality by eliminating the mitochondria to a basal level to fulfill cellular energy requirements and preventing excess ROS production. The protease activity is required for proteolytic activation of ATG8: cleaves the C-terminal amino acid of ATG8 to reveal a C-terminal glycine. ATG8 ubiquitin-like activity requires the exposure of the glycine at the C-terminus for its conjugation to phosphatidylethanolamine (PE) and its insertion to membranes, which is necessary for autophagy. The ATG8-PE conjugate mediates tethering between adjacent membranes and stimulates membrane hemifusion, leading to expansion of the autophagosomal membrane during autophagy. In addition to the protease activity, also catalyzes deconjugation of PE-conjugated forms of ATG8 during macroautophagy: ATG8 delipidation is required to release the protein from membranes, which facilitates multiple events during macroautophagy, and especially for efficient autophagosome biogenesis, the assembly of ATG9-containing tubulovesicular clusters into phagophores/autophagosomes, and for the disassembly of PAS-associated ATG components. ATG8 delipidation by ATG4 also recycles ATG8-PE generated on inappropriate membranes to maintain a reservoir of unlipidated ATG8 that is required for autophagosome formation at the PAS. The protein is Cysteine protease ATG4 (ATG4) of Candida albicans (strain SC5314 / ATCC MYA-2876) (Yeast).